Here is a 299-residue protein sequence, read N- to C-terminus: Peroxisomal biogenesis factor 19 (299 aa).

Residues 1-63 form a disordered region; it reads MAAAEGDGGV…SPGDTAKDAL (63 aa). N-acetylalanine is present on Ala-2. The segment at 2 to 56 is docking to the peroxisome membrane and binding to PEX3; it reads AAAEGDGGVRAEADRELEELLESALDDFDKAKPSPAPPPTTTAPDASGPQKRSPG. Residues 2–91 are necessary for PEX19 function on peroxisome biogenesis; it reads AAAEGDGGVR…QATAEFEKAM (90 aa). Positions 16 to 27 are enriched in acidic residues; the sequence is RELEELLESALD. Phosphoserine occurs at positions 35, 54, and 66. Thr-236 is subject to Phosphothreonine. A Cysteine methyl ester modification is found at Cys-296. Cys-296 is lipidated: S-farnesyl cysteine. Positions 297-299 are cleaved as a propeptide — removed in mature form; that stretch reads LIM.

It belongs to the peroxin-19 family. As to quaternary structure, interacts with a broad range of peroxisomal membrane proteins, including PEX3, PEX10, PEX11A, PEX11B, PEX12, PEX13, PEX14 and PEX16, PXMP2/PMP22, PXMP4/PMP24, SLC25A17/PMP34, ABCD1/ALDP, ABCD2/ALDRP, and ABCD3/PMP70. Also interacts with the tumor suppressor CDKN2A/p19ARF.

The protein localises to the cytoplasm. Its subcellular location is the peroxisome membrane. Functionally, necessary for early peroxisomal biogenesis. Acts both as a cytosolic chaperone and as an import receptor for peroxisomal membrane proteins (PMPs). Binds and stabilizes newly synthesized PMPs in the cytoplasm by interacting with their hydrophobic membrane-spanning domains, and targets them to the peroxisome membrane by binding to the integral membrane protein PEX3. Excludes CDKN2A from the nucleus and prevents its interaction with MDM2, which results in active degradation of TP53. The chain is Peroxisomal biogenesis factor 19 (PEX19) from Bos taurus (Bovine).